Reading from the N-terminus, the 371-residue chain is COP9 signalosome complex subunit 5 (371 aa).

The MPN domain occupies 51-188; the sequence is VKISAVALIK…IGAFRTYPEG (138 aa). 3 residues coordinate Zn(2+): His134, His136, and Asp147. Residues 134–147 carry the JAMM motif motif; that stretch reads HSHPGYGCWLSGID. Low complexity predominate over residues 278-292; the sequence is NSSSKLKLKPTQPTT. Disordered regions lie at residues 278 to 333 and 352 to 371; these read NSSS…SRIT and TPLT…QGRY. The span at 293–313 shows a compositional bias: basic and acidic residues; it reads KGKETTEGSDKKLKKGEKEFS. Positions 323-333 are enriched in polar residues; that stretch reads NKVTQESSRIT.

This sequence belongs to the peptidase M67A family. CSN5 subfamily. In terms of assembly, component of the COP9 signalosome (CSN) complex.

The protein resides in the cytoplasm. The protein localises to the nucleus. In terms of biological role, catalytic Component of the COP9 signalosome (CSN) complex that acts as an regulator of the ubiquitin (Ubl) conjugation pathway by mediating the deneddylation of the cullin subunit of SCF-type E3 ubiquitin-protein ligase complexes. The polypeptide is COP9 signalosome complex subunit 5 (RRI1) (Cryptococcus neoformans var. neoformans serotype D (strain B-3501A) (Filobasidiella neoformans)).